Reading from the N-terminus, the 264-residue chain is Phosphonoacetaldehyde hydrolase (264 aa).

Asp-9 acts as the Nucleophile in catalysis. Residues Asp-9 and Ala-11 each contribute to the Mg(2+) site. The active-site Schiff-base intermediate with substrate is the Lys-50. Asp-183 is a binding site for Mg(2+).

Belongs to the HAD-like hydrolase superfamily. PhnX family. In terms of assembly, homodimer. Mg(2+) is required as a cofactor.

The catalysed reaction is phosphonoacetaldehyde + H2O = acetaldehyde + phosphate + H(+). Functionally, involved in phosphonate degradation. The protein is Phosphonoacetaldehyde hydrolase of Bacillus cereus (strain ZK / E33L).